Consider the following 248-residue polypeptide: Granzyme-like protein 1 (248 aa).

A signal peptide spans 1–18 (MNLLLLLLTVSLAPTTEA). A propeptide spans 19–20 (AE) (activation peptide). In terms of domain architecture, Peptidase S1 spans 21 to 246 (IIGGHEADPH…FLSWIEETMK (226 aa)). A disulfide bridge connects residues Cys-50 and Cys-66. Residue His-65 is the Charge relay system of the active site. Asn-72 is a glycosylation site (N-linked (GlcNAc...) asparagine). Asp-109 serves as the catalytic Charge relay system. 2 disulfide bridges follow: Cys-143-Cys-210 and Cys-174-Cys-189. Ser-204 functions as the Charge relay system in the catalytic mechanism.

The protein belongs to the peptidase S1 family. Granzyme subfamily. As to expression, duodenum.

Functionally, this enzyme is necessary for target cell lysis in cell-mediated immune responses. The protein is Granzyme-like protein 1 of Rattus norvegicus (Rat).